A 273-amino-acid chain; its full sequence is 4-hydroxy-tetrahydrodipicolinate reductase (273 aa).

NAD(+) is bound by residues Gly12–Met17 and Glu38. Arg39 provides a ligand contact to NADP(+). NAD(+)-binding positions include Gly102 to Thr104 and Ala126 to Phe129. The active-site Proton donor/acceptor is the His159. His160 contacts (S)-2,3,4,5-tetrahydrodipicolinate. The active-site Proton donor is the Lys163. (S)-2,3,4,5-tetrahydrodipicolinate is bound at residue Gly169–Thr170.

It belongs to the DapB family. As to quaternary structure, homotetramer.

The protein resides in the cytoplasm. It carries out the reaction (S)-2,3,4,5-tetrahydrodipicolinate + NAD(+) + H2O = (2S,4S)-4-hydroxy-2,3,4,5-tetrahydrodipicolinate + NADH + H(+). It catalyses the reaction (S)-2,3,4,5-tetrahydrodipicolinate + NADP(+) + H2O = (2S,4S)-4-hydroxy-2,3,4,5-tetrahydrodipicolinate + NADPH + H(+). The protein operates within amino-acid biosynthesis; L-lysine biosynthesis via DAP pathway; (S)-tetrahydrodipicolinate from L-aspartate: step 4/4. Functionally, catalyzes the conversion of 4-hydroxy-tetrahydrodipicolinate (HTPA) to tetrahydrodipicolinate. The chain is 4-hydroxy-tetrahydrodipicolinate reductase from Escherichia coli O157:H7.